We begin with the raw amino-acid sequence, 123 residues long: Protein Rev (123 aa).

S5 bears the Phosphoserine; by host CK2 mark. Residues I18 to S26 form a homomultimerization region. The segment at S25–R50 is disordered. Residues S34–R50 carry the Nuclear localization signal and RNA-binding (RRE) motif. Basic residues predominate over residues R35–Q49. The Nuclear export signal and binding to XPO1 motif lies at L73–D84. The tract at residues S86–N123 is disordered. The segment covering S88–E101 has biased composition (polar residues). Position 92 is a phosphoserine; by host (S92).

The protein belongs to the HIV-1 REV protein family. Homomultimer; when bound to the RRE. Multimeric assembly is essential for activity and may involve XPO1. Binds to human KPNB1, XPO1, TNPO1, RANBP5 and IPO7. Interacts with the viral Integrase. Interacts with human KHDRBS1. Interacts with human NAP1; this interaction decreases Rev multimerization and stimulates its activity. Interacts with human DEAD-box helicases DDX3 and DDX24; these interactions may serve for viral RNA export to the cytoplasm and packaging, respectively. Interacts with human PSIP1; this interaction may inhibit HIV-1 DNA integration by promoting dissociation of the Integrase-LEDGF/p75 complex. Post-translationally, asymmetrically arginine dimethylated at one site by host PRMT6. Methylation impairs the RNA-binding activity and export of viral RNA from the nucleus to the cytoplasm. Phosphorylated by protein kinase CK2. Presence of, and maybe binding to the N-terminus of the regulatory beta subunit of CK2 is necessary for CK2-mediated Rev's phosphorylation.

It is found in the host nucleus. The protein localises to the host nucleolus. The protein resides in the host cytoplasm. Functionally, escorts unspliced or incompletely spliced viral pre-mRNAs (late transcripts) out of the nucleus of infected cells. These pre-mRNAs carry a recognition sequence called Rev responsive element (RRE) located in the env gene, that is not present in fully spliced viral mRNAs (early transcripts). This function is essential since most viral proteins are translated from unspliced or partially spliced pre-mRNAs which cannot exit the nucleus by the pathway used by fully processed cellular mRNAs. Rev itself is translated from a fully spliced mRNA that readily exits the nucleus. Rev's nuclear localization signal (NLS) binds directly to KPNB1/Importin beta-1 without previous binding to KPNA1/Importin alpha-1. KPNB1 binds to the GDP bound form of RAN (Ran-GDP) and targets Rev to the nucleus. In the nucleus, the conversion from Ran-GDP to Ran-GTP dissociates Rev from KPNB1 and allows Rev's binding to the RRE in viral pre-mRNAs. Rev multimerization on the RRE via cooperative assembly exposes its nuclear export signal (NES) to the surface. Rev can then form a complex with XPO1/CRM1 and Ran-GTP, leading to nuclear export of the complex. Conversion from Ran-GTP to Ran-GDP mediates dissociation of the Rev/RRE/XPO1/RAN complex, so that Rev can return to the nucleus for a subsequent round of export. Beside KPNB1, also seems to interact with TNPO1/Transportin-1, RANBP5/IPO5 and IPO7/RANBP7 for nuclear import. The nucleoporin-like HRB/RIP is an essential cofactor that probably indirectly interacts with Rev to release HIV RNAs from the perinuclear region to the cytoplasm. This is Protein Rev from Human immunodeficiency virus type 1 group M subtype A (isolate U455) (HIV-1).